The primary structure comprises 478 residues: Alpha-1,3-mannosyl-glycoprotein 4-beta-N-acetylglucosaminyltransferase C (478 aa).

The Cytoplasmic portion of the chain corresponds to M1 to R23. The helical; Signal-anchor for type II membrane protein transmembrane segment at S24 to E44 threads the bilayer. Residues D45–S478 are Lumenal-facing. N-linked (GlcNAc...) asparagine glycans are attached at residues N84 and N215.

It belongs to the glycosyltransferase 54 family. Requires a divalent metal cation as cofactor.

The protein resides in the golgi apparatus membrane. It carries out the reaction N(4)-{beta-D-GlcNAc-(1-&gt;2)-alpha-D-Man-(1-&gt;3)-[beta-D-GlcNAc-(1-&gt;2)-alpha-D-Man-(1-&gt;6)]-beta-D-Man-(1-&gt;4)-beta-D-GlcNAc-(1-&gt;4)-beta-D-GlcNAc}-L-asparaginyl-[protein] + UDP-N-acetyl-alpha-D-glucosamine = N(4)-{beta-D-GlcNAc-(1-&gt;2)-[beta-D-GlcNAc-(1-&gt;4)]-alpha-D-Man-(1-&gt;3)-[beta-D-GlcNAc-(1-&gt;2)-alpha-D-Man-(1-&gt;6)]-beta-D-Man-(1-&gt;4)-beta-D-GlcNAc-(1-&gt;4)-beta-D-GlcNAc}-L-asparaginyl-[protein] + UDP + H(+). Its pathway is protein modification; protein glycosylation. Functionally, glycosyltransferase that participates in the transfer of N-acetylglucosamine (GlcNAc) to the core mannose residues of N-linked glycans. Catalyzes the formation of the GlcNAcbeta1-4 branch on the GlcNAcbeta1-2Manalpha1-3 arm of the core structure of N-linked glycans. Essential for the production of tri- and tetra-antennary N-linked sugar chains. Does not catalyze the transfer of GlcNAc to the Manalpha1-6 arm to form GlcNAcBeta1-4Manalpha1-6 linkage ('GnT-VI' activity). The sequence is that of Alpha-1,3-mannosyl-glycoprotein 4-beta-N-acetylglucosaminyltransferase C (MGAT4C) from Macaca fascicularis (Crab-eating macaque).